The primary structure comprises 504 residues: MSATEDKKDPASMLAELKLDKDEGNKTPETKTPESNSAETKTTEEVKELKNPFTQKKEDVENDAAEEKTNEVNKDDAKDERENKDTNLIKSEYEVKVNLADLQADPNSPLYSVKSFDELGLSPELLKGIYAMKFQKPSKIQERALPLLLSNPPRNMIAQSQSGTGKTAAFSLTMLSRVDETQNVPQAICLAPSRELARQTLEVIQEMGKYTKITTQLIVPDSFEKNTKINANVVVGTPGTLLDLIRRKLIQLQNVKIFVLDEADNMLDKQGLGDQCIRVKKFLPKDTQLVLFSATFADAVKAYAQKVIPNANTLELQRNEVNVKAIKQLYMDCNDEAHKYEVLCELYGLLTIGSSIIFVAKKDTANLLYGKLKHEGHQVSILHSDLRTDERDRLIDDFREGRSKVLITTNVLARGIDIPSVSMVVNYDLPTLPNGMPDYATYVHRIGRTGRFGRTGVAISFVHDKKSFKILSAIQDYFKDIELTRVPTDDWDEVEDIVKKVLKQ.

Composition is skewed to basic and acidic residues over residues 1–10 (MSATEDKKDP), 17–32 (LKLDKDEGNKTPETKT), and 41–85 (KTTE…ENKD). The interval 1–85 (MSATEDKKDP…DAKDERENKD (85 aa)) is disordered. A Q motif motif is present at residues 114-142 (KSFDELGLSPELLKGIYAMKFQKPSKIQE). One can recognise a Helicase ATP-binding domain in the interval 147-314 (LLLSNPPRNM…QKVIPNANTL (168 aa)). 160 to 167 (SQSGTGKT) lines the ATP pocket. A DEAD box motif is present at residues 261–264 (DEAD). The region spanning 325-502 (AIKQLYMDCN…EVEDIVKKVL (178 aa)) is the Helicase C-terminal domain.

Belongs to the DEAD box helicase family. DDX19/DBP5 subfamily. Associates with the nuclear pore complex.

It localises to the cytoplasm. Its subcellular location is the nucleus. The protein localises to the nuclear pore complex. It is found in the nucleus membrane. The catalysed reaction is ATP + H2O = ADP + phosphate + H(+). Functionally, ATP-dependent RNA helicase associated with the nuclear pore complex and essential for mRNA export from the nucleus. May participate in a terminal step of mRNA export through the removal of proteins that accompany mRNA through the nucleopore complex. May also be involved in early transcription. The polypeptide is ATP-dependent RNA helicase DBP5 (DBP5) (Candida glabrata (strain ATCC 2001 / BCRC 20586 / JCM 3761 / NBRC 0622 / NRRL Y-65 / CBS 138) (Yeast)).